Here is a 205-residue protein sequence, read N- to C-terminus: Quinone-oxidoreductase QR2 (205 aa).

The Flavodoxin-like domain maps to 5 to 192 (VYIVYYSTYG…LKQAFHQGMY (188 aa)). Residues 11-15 (STYGH), 112-165 (IFFS…SPYG), and H136 each bind FMN. Residue Y13 coordinates NAD(+).

It belongs to the WrbA family. The cofactor is FMN.

It carries out the reaction a quinone + NADH + H(+) = a quinol + NAD(+). It catalyses the reaction a quinone + NADPH + H(+) = a quinol + NADP(+). Inhibited by dicumarol. In terms of biological role, NAD(P)H:quinone oxidoreductase reducing quinones by a two-electron transfer mechanism. Can use either NADPH or NADH as electron donor. Can use menadione, 5-hydroxy-1,4-naphthoquinone (juglone) and 2,6-dimethoxy-p-benzoquinone (DMBQ) as substrates. Mitigates the toxicity of exogenous quinones in the rhizosphere. In Triphysaria versicolor (Yellow owl's clover), this protein is Quinone-oxidoreductase QR2.